Here is a 318-residue protein sequence, read N- to C-terminus: Probable casein kinase I homolog ECU11_1980 (318 aa).

The 269-residue stretch at tyrosine 8–phenylalanine 276 folds into the Protein kinase domain. Residues isoleucine 14–valine 22 and lysine 37 contribute to the ATP site. The active-site Proton acceptor is aspartate 129.

This sequence belongs to the protein kinase superfamily. CK1 Ser/Thr protein kinase family. Casein kinase I subfamily.

Its subcellular location is the nucleus. It carries out the reaction L-seryl-[protein] + ATP = O-phospho-L-seryl-[protein] + ADP + H(+). It catalyses the reaction L-threonyl-[protein] + ATP = O-phospho-L-threonyl-[protein] + ADP + H(+). Involved in DNA repair. May regulate the activity of protein(s) involved in double strand break repair caused by gamma rays. In Encephalitozoon cuniculi (strain GB-M1) (Microsporidian parasite), this protein is Probable casein kinase I homolog ECU11_1980.